Reading from the N-terminus, the 342-residue chain is Dihydroorotase (342 aa).

Residues His-13 and His-15 each contribute to the Zn(2+) site. Substrate contacts are provided by residues 15 to 17 and Asn-41; that span reads HLR. Residues Lys-98, His-135, and His-173 each coordinate Zn(2+). N6-carboxylysine is present on Lys-98. His-135 contributes to the substrate binding site. Leu-218 lines the substrate pocket. Residue Asp-246 participates in Zn(2+) binding. Asp-246 is an active-site residue. Residues His-250 and Ala-262 each coordinate substrate.

It belongs to the metallo-dependent hydrolases superfamily. DHOase family. Class II DHOase subfamily. Homodimer. Requires Zn(2+) as cofactor.

The enzyme catalyses (S)-dihydroorotate + H2O = N-carbamoyl-L-aspartate + H(+). It participates in pyrimidine metabolism; UMP biosynthesis via de novo pathway; (S)-dihydroorotate from bicarbonate: step 3/3. Catalyzes the reversible cyclization of carbamoyl aspartate to dihydroorotate. The sequence is that of Dihydroorotase from Vibrio campbellii (strain ATCC BAA-1116).